Here is a 205-residue protein sequence, read N- to C-terminus: MNLHGLELPGRDQRLSPEVIDLTEDIEDDGADVSEVTLLDLTRIPEFQPRRRIRTSRNHLDANLSNVPTINSIPSPVTRPPVAVGGGIFYGARRTRNRSQTQRRTLLENGFRNSRKKAQDSSNSIAERVSPPPGFCYDVHPHNNIACAKCGNELVSDEKKSIFAAKCGHLFCSTCAKELRKKTVPCPVQHCRKRITKKFIFPLYL.

Residues 147-190 (CAKCGNELVSDEKKSIFAAKCGHLFCSTCAKELRKKTVPCPVQH) form an RING-type; degenerate zinc finger.

As to quaternary structure, part of an E3 ubiquitin complex including rfp1, rfp2 and slx8. Interacts with slx8.

It is found in the nucleus. It carries out the reaction S-ubiquitinyl-[E2 ubiquitin-conjugating enzyme]-L-cysteine + [acceptor protein]-L-lysine = [E2 ubiquitin-conjugating enzyme]-L-cysteine + N(6)-ubiquitinyl-[acceptor protein]-L-lysine.. It participates in protein modification; protein ubiquitination. Mediates ubiquitination and subsequent desumoylation/degradation of sumoylated proteins and proteins containing SUMO-like domains. Involved in maintaining genome stability where it acts in the cellular response to DNA damage. The sequence is that of E3 ubiquitin-protein ligase complex slx8-rfp subunit rfp2 (rfp2) from Schizosaccharomyces pombe (strain 972 / ATCC 24843) (Fission yeast).